We begin with the raw amino-acid sequence, 209 residues long: MIDNNILVKGNKEGINIVININKFKDFEEMLEALVKRLSVGKMFYKGCNLKIITDLKNINEKQSVRLKQVLFEKFLIKDCIFEDSNEKPSKIFSGIYEGRTKFLRKTIRGGQVVNYPGNIVIIGDVNAGSEIYVGGNIVVFGALRGYAHAGFGGNSKAIVAAISLEPEMLQIADLVTRSPDNMKPQYPEVAKIRGNIIIVEPYLPNKFI.

It belongs to the MinC family. As to quaternary structure, interacts with MinD and FtsZ.

Its function is as follows. Cell division inhibitor that blocks the formation of polar Z ring septums. Rapidly oscillates between the poles of the cell to destabilize FtsZ filaments that have formed before they mature into polar Z rings. Prevents FtsZ polymerization. The polypeptide is Probable septum site-determining protein MinC (Clostridium kluyveri (strain NBRC 12016)).